Here is a 171-residue protein sequence, read N- to C-terminus: Large ribosomal subunit protein uL10 (171 aa).

It belongs to the universal ribosomal protein uL10 family. Part of the ribosomal stalk of the 50S ribosomal subunit. The N-terminus interacts with L11 and the large rRNA to form the base of the stalk. The C-terminus forms an elongated spine to which L12 dimers bind in a sequential fashion forming a multimeric L10(L12)X complex.

Forms part of the ribosomal stalk, playing a central role in the interaction of the ribosome with GTP-bound translation factors. The sequence is that of Large ribosomal subunit protein uL10 from Nitrosomonas europaea (strain ATCC 19718 / CIP 103999 / KCTC 2705 / NBRC 14298).